Consider the following 236-residue polypeptide: Peroxisomal coenzyme A diphosphatase NUDT7 (236 aa).

At Lys-20 the chain carries N6-succinyllysine. Residues 37–169 (SNKFSVLVPL…QKQITQSGRD (133 aa)) enclose the Nudix hydrolase domain. Residues 77–98 (KRDPVDTDDTATALREAQEEVG) carry the Nudix box motif. Positions 92 and 96 each coordinate Mg(2+). Residue Lys-178 is modified to N6-succinyllysine. The Microbody targeting signal motif lies at 234 to 236 (SKL).

Belongs to the Nudix hydrolase family. PCD1 subfamily. Monomer. The cofactor is Mn(2+). Mg(2+) is required as a cofactor. Highly expressed in liver, brown adipose tissue and heart. Expressed at intermediate level in lung and kidney and at low level in brain. As to expression, expressed in liver, brown adipose tissue and heart at 20 times lower levels than isoform 1.

It localises to the peroxisome. It catalyses the reaction hexanoyl-CoA + H2O = hexanoyl-4'-phosphopantetheine + adenosine 3',5'-bisphosphate + 2 H(+). The enzyme catalyses octanoyl-CoA + H2O = S-octanoyl-4'-phosphopantetheine + adenosine 3',5'-bisphosphate + 2 H(+). It carries out the reaction butanoyl-CoA + H2O = S-butanoyl-4'-phosphopantetheine + adenosine 3',5'-bisphosphate + 2 H(+). The catalysed reaction is decanoyl-CoA + H2O = decanoyl-4'-phosphopantetheine + adenosine 3',5'-bisphosphate + 2 H(+). It catalyses the reaction dodecanoyl-CoA + H2O = S-dodecanoyl-4'-phosphopantetheine + adenosine 3',5'-bisphosphate + 2 H(+). The enzyme catalyses tetradecanoyl-CoA + H2O = tetradecanoyl-4'-phosphopantetheine + adenosine 3',5'-bisphosphate + 2 H(+). It carries out the reaction choloyl-CoA + H2O = S-choloyl-4'-phosphopantetheine + adenosine 3',5'-bisphosphate + 2 H(+). The catalysed reaction is 3alpha,7alpha,12alpha-trihydroxy-5beta-cholestan-26-oyl-CoA + H2O = 3alpha,7alpha,12alpha-trihydroxy-5beta-cholestan-26-oyl-4'-phosphopantetheine + adenosine 3',5'-bisphosphate + 2 H(+). It catalyses the reaction acetyl-CoA + H2O = S-acetyl-4'-phosphopantetheine + adenosine 3',5'-bisphosphate + 2 H(+). The enzyme catalyses CoA + H2O = (R)-4'-phosphopantetheine + adenosine 3',5'-bisphosphate + 2 H(+). It carries out the reaction propanoyl-CoA + H2O = propanoyl-4'-phosphopantetheine + adenosine 3',5'-bisphosphate + 2 H(+). The catalysed reaction is malonyl-CoA + H2O = malonyl-4'-phosphopantetheine + adenosine 3',5'-bisphosphate + 2 H(+). It catalyses the reaction succinyl-CoA + H2O = succinyl-4'-phosphopantetheine + adenosine 3',5'-bisphosphate + 2 H(+). The enzyme catalyses a 5'-end CoA-ribonucleoside in mRNA + H2O = a 5'-end phospho-adenosine-phospho-ribonucleoside in mRNA + (R)-4'-phosphopantetheine + 2 H(+). With respect to regulation, inhibited by fluoride. Its function is as follows. Fatty acyl-coenzyme A (CoA) diphosphatase that hydrolyzes fatty acyl-CoA to yield acyl-4'-phosphopantetheine and adenosine 3',5'-bisphosphate. Cleaves CoA, CoA esters and oxidized CoA with similar efficiencies. Preferentially hydrolyzes medium-chain acyl-CoAs and bile acid-CoAs. Has no activity toward NDP-sugars, CDP-alcohols, (deoxy)nucleoside 5'-triphosphates, nucleoside 5'-di or monophosphates, diadenosine polyphosphates, NAD, NADH, NADP, NADPH or thymidine-5'-monophospho-p-nitrophenyl ester. May be required to eliminate oxidized CoA from peroxisomes, or regulate CoA and acyl-CoA levels in this organelle in response to metabolic demand. Does not play a role in U8 snoRNA decapping activity. Binds U8 snoRNA. Exhibits decapping activity towards dpCoA-capped RNAs in vitro. This chain is Peroxisomal coenzyme A diphosphatase NUDT7, found in Mus musculus (Mouse).